We begin with the raw amino-acid sequence, 618 residues long: Sodium/iodide cotransporter (618 aa).

The Extracellular portion of the chain corresponds to M1–A14. A helical membrane pass occupies residues W15–G31. The Cytoplasmic portion of the chain corresponds to L32 to A56. A discontinuously helical membrane pass occupies residues V57–A80. S69, V71, and Q72 together coordinate Na(+). V76 is a binding site for iodide. The Extracellular portion of the chain corresponds to A81–G84. The chain crosses the membrane as a helical span at residues L85–F105. An iodide-binding site is contributed by M90. The Cytoplasmic segment spans residues L106 to R130. The chain crosses the membrane as a helical span at residues L131–N157. Y144 provides a ligand contact to Na(+). The Extracellular segment spans residues Q158–D163. Residues I164 to V181 form a helical membrane-spanning segment. At G182–W189 the chain is on the cytoplasmic side. The helical transmembrane segment at T190 to R208 threads the bilayer. Residues G209–T243 are Extracellular-facing. Residues F244 to V266 form a discontinuously helical membrane-spanning segment. W255 contributes to the iodide binding site. A Na(+)-binding site is contributed by M258. Over Q267–A278 the chain is Cytoplasmic. A helical transmembrane segment spans residues K279 to I301. Residues V302–D335 lie on the Extracellular side of the membrane. Residues L336–A363 form a helical membrane-spanning segment. Over A364–I386 the chain is Cytoplasmic. A helical transmembrane segment spans residues S387–L408. At G409–G411 the chain is on the extracellular side. Residues V412 to L437 form a helical membrane-spanning segment. Residue L413 coordinates iodide. S416 and F417 together coordinate Na(+). An iodide-binding site is contributed by F417. The Cytoplasmic portion of the chain corresponds to P438 to N441. The chain crosses the membrane as a helical span at residues T442–L465. Residues Y466–A520 lie on the Extracellular side of the membrane. N-linked (GlcNAc...) asparagine glycosylation is found at N485 and N497. Residues I521–T545 form a helical membrane-spanning segment. Residues G546–L618 are Cytoplasmic-facing. At S551 the chain carries Phosphoserine; by PKA. The disordered stretch occupies residues E587–L618.

It belongs to the sodium:solute symporter (SSF) (TC 2.A.21) family. In terms of assembly, monomer.

It localises to the cell membrane. The protein resides in the cytoplasm. It catalyses the reaction iodide(out) + 2 Na(+)(out) = iodide(in) + 2 Na(+)(in). The enzyme catalyses chlorate(out) + 2 Na(+)(out) = chlorate(in) + 2 Na(+)(in). The catalysed reaction is thiocyanate(out) + 2 Na(+)(out) = thiocyanate(in) + 2 Na(+)(in). It carries out the reaction nitrate(out) + 2 Na(+)(out) = nitrate(in) + 2 Na(+)(in). It catalyses the reaction selenocyanate(out) + 2 Na(+)(out) = selenocyanate(in) + 2 Na(+)(in). Perchlorate inhibits iodide transport activity. Oxyanions inhibit iodide transport activity by blocking the binding sites for iodide and one of the sodium ions. Its function is as follows. Sodium:iodide symporter that mediates the transport of iodide into the thyroid gland. Can also mediate the transport of chlorate, thiocynate, nitrate and selenocynate. This is Sodium/iodide cotransporter (Slc5a5) from Rattus norvegicus (Rat).